Reading from the N-terminus, the 429-residue chain is Inositol-3-phosphate synthase 1 (429 aa).

The helical transmembrane segment at 12 to 32 (LGVLVVGVGGAVATTMIVGTL) threads the bilayer. Ala22, Val23, Asp79, Ala116, Ala165, Thr167, Tyr201, Ser244, Arg276, Asp277, and Lys290 together coordinate NAD(+).

It belongs to the myo-inositol 1-phosphate synthase family. In terms of assembly, homotetramer. Requires NAD(+) as cofactor.

It localises to the membrane. The enzyme catalyses D-glucose 6-phosphate = 1D-myo-inositol 3-phosphate. It functions in the pathway polyol metabolism; myo-inositol biosynthesis; myo-inositol from D-glucose 6-phosphate: step 1/2. Functionally, key enzyme in myo-inositol biosynthesis pathway that catalyzes the conversion of glucose 6-phosphate to 1D-myo-inositol 3-phosphate in a NAD-dependent manner. This Bacteroides thetaiotaomicron (strain ATCC 29148 / DSM 2079 / JCM 5827 / CCUG 10774 / NCTC 10582 / VPI-5482 / E50) protein is Inositol-3-phosphate synthase 1.